The primary structure comprises 352 residues: Homocitrate synthase, omega subunit (352 aa).

It belongs to the alpha-IPM synthase/homocitrate synthase family. As to quaternary structure, heterodimer of an alpha and an omega chain.

It carries out the reaction acetyl-CoA + 2-oxoglutarate + H2O = (2R)-homocitrate + CoA + H(+). In terms of biological role, this protein is a Fe-Mo-cofactor biosynthetic component. The protein is Homocitrate synthase, omega subunit (nifV-OMEGA) of Clostridium pasteurianum.